Here is a 156-residue protein sequence, read N- to C-terminus: Ribosomal RNA large subunit methyltransferase H (156 aa).

S-adenosyl-L-methionine contacts are provided by residues Leu-72, Gly-104, and 123-128 (FGKMVW).

This sequence belongs to the RNA methyltransferase RlmH family. In terms of assembly, homodimer.

The protein resides in the cytoplasm. It carries out the reaction pseudouridine(1915) in 23S rRNA + S-adenosyl-L-methionine = N(3)-methylpseudouridine(1915) in 23S rRNA + S-adenosyl-L-homocysteine + H(+). In terms of biological role, specifically methylates the pseudouridine at position 1915 (m3Psi1915) in 23S rRNA. This chain is Ribosomal RNA large subunit methyltransferase H, found in Ruegeria sp. (strain TM1040) (Silicibacter sp.).